The primary structure comprises 397 residues: Phosphoglycerate kinase (397 aa).

Residues aspartate 21–asparagine 23, arginine 37, histidine 60–arginine 63, arginine 119, and arginine 152 contribute to the substrate site. Residues lysine 203, glycine 294, glutamate 325, and glycine 354 to serine 357 each bind ATP.

Belongs to the phosphoglycerate kinase family. As to quaternary structure, monomer.

Its subcellular location is the cytoplasm. The enzyme catalyses (2R)-3-phosphoglycerate + ATP = (2R)-3-phospho-glyceroyl phosphate + ADP. It functions in the pathway carbohydrate degradation; glycolysis; pyruvate from D-glyceraldehyde 3-phosphate: step 2/5. The polypeptide is Phosphoglycerate kinase (Chlorobium luteolum (strain DSM 273 / BCRC 81028 / 2530) (Pelodictyon luteolum)).